Here is a 164-residue protein sequence, read N- to C-terminus: 3-isopropylmalate dehydratase small subunit (164 aa).

It belongs to the LeuD family. LeuD type 2 subfamily. In terms of assembly, heterodimer of LeuC and LeuD.

It carries out the reaction (2R,3S)-3-isopropylmalate = (2S)-2-isopropylmalate. Its pathway is amino-acid biosynthesis; L-leucine biosynthesis; L-leucine from 3-methyl-2-oxobutanoate: step 2/4. Its function is as follows. Catalyzes the isomerization between 2-isopropylmalate and 3-isopropylmalate, via the formation of 2-isopropylmaleate. The chain is 3-isopropylmalate dehydratase small subunit from Syntrophus aciditrophicus (strain SB).